We begin with the raw amino-acid sequence, 633 residues long: 1-deoxy-D-xylulose-5-phosphate synthase 2 (633 aa).

Residues histidine 73 and 113–115 contribute to the thiamine diphosphate site; that span reads SHA. Mg(2+) is bound at residue aspartate 145. Thiamine diphosphate contacts are provided by residues 146–147, asparagine 175, tyrosine 286, and glutamate 367; that span reads GA. Asparagine 175 is a binding site for Mg(2+).

The protein belongs to the transketolase family. DXPS subfamily. Homodimer. It depends on Mg(2+) as a cofactor. Requires thiamine diphosphate as cofactor.

It catalyses the reaction D-glyceraldehyde 3-phosphate + pyruvate + H(+) = 1-deoxy-D-xylulose 5-phosphate + CO2. Its pathway is metabolic intermediate biosynthesis; 1-deoxy-D-xylulose 5-phosphate biosynthesis; 1-deoxy-D-xylulose 5-phosphate from D-glyceraldehyde 3-phosphate and pyruvate: step 1/1. Functionally, catalyzes the acyloin condensation reaction between C atoms 2 and 3 of pyruvate and glyceraldehyde 3-phosphate to yield 1-deoxy-D-xylulose-5-phosphate (DXP). The polypeptide is 1-deoxy-D-xylulose-5-phosphate synthase 2 (Kitasatospora griseola (Streptomyces griseolosporeus)).